The sequence spans 348 residues: [LysW]-L-2-aminoadipate 6-phosphate reductase (348 aa).

14 to 17 (SGYA) is an NADP(+) binding site. Cys151 is a catalytic residue. Position 315 (Asn315) interacts with NADP(+).

The protein belongs to the NAGSA dehydrogenase family. Type 1 subfamily. LysY sub-subfamily.

It is found in the cytoplasm. The enzyme catalyses [amino-group carrier protein]-C-terminal-N-(1-carboxy-5-oxopentan-1-yl)-L-glutamine + phosphate + NADP(+) = [amino-group carrier protein]-C-terminal-N-(1-carboxy-5-phosphooxy-5-oxopentan-1-yl)-L-glutamine + NADPH + H(+). The protein operates within amino-acid biosynthesis; L-lysine biosynthesis via AAA pathway; L-lysine from L-alpha-aminoadipate (Thermus route): step 3/5. Functionally, catalyzes the NADPH-dependent reduction of [LysW]-aminoadipate 6-phosphate to yield [LysW]-aminoadipate 6-semialdehyde. This Deinococcus radiodurans (strain ATCC 13939 / DSM 20539 / JCM 16871 / CCUG 27074 / LMG 4051 / NBRC 15346 / NCIMB 9279 / VKM B-1422 / R1) protein is [LysW]-L-2-aminoadipate 6-phosphate reductase.